We begin with the raw amino-acid sequence, 1896 residues long: Obscurin-like protein 1 (1896 aa).

S10 bears the Phosphoserine mark. The Ig-like 1 domain occupies 12–100; the sequence is PCFLRFPRPV…GEAYAAAAVT (89 aa). The segment at 17–19 is interaction with TTN; it reads FPR. The cysteines at positions 33 and 84 are disulfide-linked. The segment at 85–94 is interaction with TTN; the sequence is RARNAAGEAY. Residues 106–127 form a disordered region; the sequence is ASDPELQPAERPLPSPGSGEGA. Ig-like domains are found at residues 128 to 225, 243 to 330, and 339 to 425; these read PVFL…ALLQ, PVVE…QTLS, and PRLR…ANVT. 3 disulfide bridges follow: C149–C209, C267–C319, and C362–C412. Positions 517 to 615 constitute a Fibronectin type-III domain; sequence PPGPPILAEM…FHGSAHLVPT (99 aa). 10 consecutive Ig-like domains span residues 714–800, 804–893, 902–982, 986–1075, 1078–1172, 1174–1261, 1265–1357, 1357–1534, 1628–1720, and 1794–1896; these read PVHI…FGVT, PPVH…VTIT, PSGK…FTVT, PPVR…VTVT, PERI…PPVQ, LALE…FTVQ, PPVR…VEEP, PLLV…ARLS, PVTI…RTVA, and PAQS…VEGN. Intrachain disulfides connect C738/C788, C829/C879, C920/C970, C1011/C1061, C1103/C1153, and C1195/C1245. Intrachain disulfides connect C1381-C1522 and C1650-C1700.

Component of the 3M complex, composed of core components CUL7, CCDC8 and OBSL1. Interacts with CCDC8. Interacts with CUL7; the interaction is direct. Interacts with FBXW8. Interacts (via N-terminal Ig-like domain) with TTN/titin (via C-terminal Ig-like domain); the interaction is direct. As to expression, widely expressed, with predominant levels found in the heart.

It is found in the cytoplasm. The protein resides in the cytoskeleton. The protein localises to the microtubule organizing center. It localises to the centrosome. Its subcellular location is the perinuclear region. It is found in the golgi apparatus. Functionally, core component of the 3M complex, a complex required to regulate microtubule dynamics and genome integrity. It is unclear how the 3M complex regulates microtubules, it could act by controlling the level of a microtubule stabilizer. Acts as a regulator of the Cul7-RING(FBXW8) ubiquitin-protein ligase, playing a critical role in the ubiquitin ligase pathway that regulates Golgi morphogenesis and dendrite patterning in brain. Required to localize CUL7 to the Golgi apparatus in neurons. This is Obscurin-like protein 1 from Homo sapiens (Human).